Reading from the N-terminus, the 225-residue chain is Probable septum site-determining protein MinC (225 aa).

Residues 87–112 (PTHMASPQGNSSKTRSSDTQPKPKTP) are disordered. A compositionally biased stretch (polar residues) spans 91 to 108 (ASPQGNSSKTRSSDTQPK).

This sequence belongs to the MinC family. Interacts with MinD and FtsZ.

Its function is as follows. Cell division inhibitor that blocks the formation of polar Z ring septums. Rapidly oscillates between the poles of the cell to destabilize FtsZ filaments that have formed before they mature into polar Z rings. Prevents FtsZ polymerization. The sequence is that of Probable septum site-determining protein MinC from Prochlorococcus marinus (strain MIT 9313).